The chain runs to 299 residues: 5,10-dihydrophenazine-1-carboxylate 9-dimethylallyltransferase (299 aa).

Belongs to the aromatic prenyltransferase family.

The catalysed reaction is 5,10-dihydrophenazine 1-carboxylate + dimethylallyl diphosphate = 5,10-dihydro-9-dimethylallylphenazine 1-carboxylate + diphosphate. The protein operates within antibiotic biosynthesis; phenazine biosynthesis. With respect to regulation, does not require magnesium or any other divalent metal ions for activity. Functionally, involved in the biosynthesis of prenylated phenazines. Catalyzes the transfer of a dimethylallyl moiety to C-9 of 5,10-dihydrophenazine 1-carboxylate (dihydro-PCA). Specific for both dimethylallyl diphosphate and dihydro-PCA. This chain is 5,10-dihydrophenazine-1-carboxylate 9-dimethylallyltransferase, found in Streptomyces anulatus (Streptomyces chrysomallus).